Reading from the N-terminus, the 1282-residue chain is Clustered mitochondria protein homolog (1282 aa).

Residues 1-43 (MEQNNGTTEHPKEVLDQTNPSNEVTGVPNGNHAEGEGDQNAGE) are disordered. The 245-residue stretch at 341–585 (DITRPQENYL…RITPLDVLWY (245 aa)) folds into the Clu domain. Basic and acidic residues-rich tracts occupy residues 631-641 (EAEEKAEESKP) and 653-669 (ESEK…RVDI). 2 disordered regions span residues 631–669 (EAEE…RVDI) and 892–936 (RSQL…PAPA). The span at 924 to 936 (QASPRPAQSPAPA) shows a compositional bias: low complexity. A TPR repeat occupies 1003-1036 (AKLYHQLSMLYYQSDDKDAAVELARKAVIVTERT). The interval 1202–1282 (ANLPTRLGTK…SKQSTVKPSS (81 aa)) is disordered. Over residues 1212–1223 (PQPQVGQTTSEM) the composition is skewed to polar residues. Residues 1257-1272 (TKQKKRAAARNPKLRG) are compositionally biased toward basic residues. The segment covering 1273-1282 (SKQSTVKPSS) has biased composition (polar residues).

The protein belongs to the CLU family. In terms of assembly, may associate with the eukaryotic translation initiation factor 3 (eIF-3) complex.

The protein localises to the cytoplasm. In terms of biological role, mRNA-binding protein involved in proper cytoplasmic distribution of mitochondria. This Coccidioides immitis (strain RS) (Valley fever fungus) protein is Clustered mitochondria protein homolog.